Consider the following 135-residue polypeptide: MATVQQLEGRWRLVDSKGFDEYMKELGVGIALRKMGAMAKPDCIITCDGKNLTIKTESTLKTTQFSCTLGEKFEETTADGRKTQTVCNFTDGALVQHQEWDGKESTITRKLKDGKLVVECVMNNVTCTRIYEKVE.

Position 2 is an N-acetylalanine (Ala-2). Lys-17 is modified (N6-acetyllysine). The Nuclear localization signal signature appears at 24-34 (KELGVGIALRK). The N-eicosanoyl ethanolamine site is built by Cys-43 and Arg-109. A disulfide bridge links Cys-120 with Cys-127. 129–131 (RIY) contacts (9Z,12Z)-octadecadienoate. Tyr-131 lines the N-eicosanoyl ethanolamine pocket. Tyr-131 contributes to the hexadecanoate binding site. Tyr-131 carries the phosphotyrosine modification.

Belongs to the calycin superfamily. Fatty-acid binding protein (FABP) family. As to quaternary structure, monomer. Homodimer. As to expression, keratinocytes; highly expressed in psoriatic skin. Expressed in brain gray matter.

It localises to the cytoplasm. The protein localises to the nucleus. The protein resides in the synapse. Its subcellular location is the postsynaptic density. It is found in the secreted. It carries out the reaction hexadecanoate(out) = hexadecanoate(in). The enzyme catalyses (9Z,12Z)-octadecadienoate(out) = (9Z,12Z)-octadecadienoate(in). The catalysed reaction is (9Z)-octadecenoate(out) = (9Z)-octadecenoate(in). Intracellular carrier for long-chain fatty acids and related active lipids, such as endocannabinoids, that regulate the metabolism and actions of the ligands they bind. In addition to the cytosolic transport, selectively delivers specific fatty acids from the cytosol to the nucleus, wherein they activate nuclear receptors. Delivers retinoic acid to the nuclear receptor peroxisome proliferator-activated receptor delta; which promotes proliferation and survival. May also serve as a synaptic carrier of endocannabinoid at central synapses and thus controls retrograde endocannabinoid signaling. Modulates inflammation by regulating PTGES induction via NF-kappa-B activation, and prostaglandin E2 (PGE2) biosynthesis during inflammation. May be involved in keratinocyte differentiation. In Homo sapiens (Human), this protein is Fatty acid-binding protein 5.